Here is a 431-residue protein sequence, read N- to C-terminus: MSKNKAHITVNDKKIELSVRKGTLGPDVIEIASLYKETDTFTYDPGFTSTASCESKITYIDGNEGILLYRGYPIDQLAEKGDFLESCYLLLYGELPTKQEKIDFDRCIMQHTMVHEQFARFFHGFRRDSHPMAVMIACLGAMSAFYHDSIDITDPQQRMIASIRLISKVPTLAAMAYKYSIGQAFVYPRNDLSYAANFLRMCFSVPCEEYKINPVLTRAMDRIFTLHADHEQNASTSTVRLAGSSGANPFACIAAGVACLWGPAHGGANEACLKMLQEIGSVERIPEFIARAKDKNDSFRLMGFGHRVYKNYDPRAKIMQQTCHEVLKELNIQNDPLLDIAITLENIALNDEYFIEKKLYPNVDFYSGITLKALGFPTEMFTVLFALARSVGWVAQWKEMIEDPAQKISRPRQLYTGYAAREYIPIDKRVN.

Catalysis depends on residues histidine 306 and aspartate 364.

This sequence belongs to the citrate synthase family.

The catalysed reaction is oxaloacetate + acetyl-CoA + H2O = citrate + CoA + H(+). It functions in the pathway carbohydrate metabolism; tricarboxylic acid cycle; isocitrate from oxaloacetate: step 1/2. The chain is Citrate synthase (gltA) from Bartonella henselae (strain ATCC 49882 / DSM 28221 / CCUG 30454 / Houston 1) (Rochalimaea henselae).